A 91-amino-acid polypeptide reads, in one-letter code: C-C motif chemokine 5 (91 aa).

An N-terminal signal peptide occupies residues 1-23 (MKISAAALTIILTAAALCTPAPA). Intrachain disulfides connect cysteine 33–cysteine 57 and cysteine 34–cysteine 73.

It belongs to the intercrine beta (chemokine CC) family. As to expression, T-cell and macrophage specific.

The protein localises to the secreted. Functionally, chemoattractant for blood monocytes, memory T-helper cells and eosinophils. Causes the release of histamine from basophils and activates eosinophils. May activate several chemokine receptors including CCR1, CCR3, CCR4 and CCR5. May also be an agonist of the G protein-coupled receptor GPR75. Together with GPR75, may play a role in neuron survival through activation of a downstream signaling pathway involving the PI3, Akt and MAP kinases. By activating GPR75 may also play a role in insulin secretion by islet cells. The sequence is that of C-C motif chemokine 5 (Ccl5) from Mus musculus (Mouse).